A 553-amino-acid polypeptide reads, in one-letter code: Transcriptional regulator HilA (553 aa).

A DNA-binding region (ompR/PhoB-type) is located at residues 11–107 (NKKFVFDDFI…LYGQGYRFNR (97 aa)). The residue at position 62 (Asp-62) is a 4-aspartylphosphate. One copy of the TPR repeat lies at 372–405 (ADIKYYYGWNLFMAGQLEEALQTINECLKLDPTR).

In terms of biological role, the main transcriptional regulator of the Salmonella pathogenicity island 1 (SPI1) gene expression. Activates the expression of invasion genes by a direct action at their promoters and also indirectly by increasing the level of invF. Also binds upstream of prgH and directly activates the expression of prgHIJK operon. The protein is Transcriptional regulator HilA (hilA) of Salmonella paratyphi A (strain ATCC 9150 / SARB42).